A 191-amino-acid chain; its full sequence is IMP cyclohydrolase (191 aa).

Belongs to the archaeal IMP cyclohydrolase family.

It catalyses the reaction IMP + H2O = 5-formamido-1-(5-phospho-D-ribosyl)imidazole-4-carboxamide. It participates in purine metabolism; IMP biosynthesis via de novo pathway; IMP from 5-formamido-1-(5-phospho-D-ribosyl)imidazole-4-carboxamide: step 1/1. Functionally, catalyzes the cyclization of 5-formylamidoimidazole-4-carboxamide ribonucleotide to IMP. The polypeptide is IMP cyclohydrolase (Natronomonas pharaonis (strain ATCC 35678 / DSM 2160 / CIP 103997 / JCM 8858 / NBRC 14720 / NCIMB 2260 / Gabara) (Halobacterium pharaonis)).